Consider the following 264-residue polypeptide: Rano class II histocompatibility antigen, D-1 beta chain (264 aa).

Residues 1–26 (MVWLARDSCVAAVILLLTVLSPPVAL) form the signal peptide. A beta-1 region spans residues 27-120 (VRDPTPRFLE…EISESFLVPR (94 aa)). Topologically, residues 27–226 (VRDPTPRFLE…AQSTSAQNKK (200 aa)) are extracellular. Disulfide bonds link Cys42–Cys106 and Cys144–Cys200. N-linked (GlcNAc...) asparagine glycosylation is present at Asn46. Residues 121-215 (TVEPKVTVYP…SLPSPVRVEW (95 aa)) are beta-2. In terms of domain architecture, Ig-like C1-type spans 124 to 228 (PKVTVYPSKT…STSAQNKKMS (105 aa)). The tract at residues 216-226 (KAQSTSAQNKK) is connecting peptide. Residues 227 to 248 (MSGVGGIVLGLLFLGAGLFVYF) traverse the membrane as a helical segment. At 249–264 (RNQKGQSGLQPTGLLN) the chain is on the cytoplasmic side.

Belongs to the MHC class II family.

The protein resides in the membrane. In terms of biological role, involved in the presentation of foreign antigens to the immune system. The polypeptide is Rano class II histocompatibility antigen, D-1 beta chain (RT1-Db1) (Rattus norvegicus (Rat)).